The chain runs to 110 residues: Bowman-Birk type proteinase inhibitor (110 aa).

The N-terminal stretch at 1–28 (MVLMNKKAIMKLALMLFLLGFTANVVDA) is a signal peptide. Residues 29 to 42 (RFDSTSFITQVLSN) constitute a propeptide that is removed on maturation. Cystine bridges form between Cys-50-Cys-103, Cys-51-Cys-66, Cys-54-Cys-99, Cys-56-Cys-64, Cys-73-Cys-80, Cys-77-Cys-92, and Cys-82-Cys-90.

Monomer.

Inhibitor of trypsin and of chymotrypsin. The sequence is that of Bowman-Birk type proteinase inhibitor from Lens culinaris (Lentil).